Consider the following 66-residue polypeptide: Large ribosomal subunit protein bL33c (66 aa).

This sequence belongs to the bacterial ribosomal protein bL33 family.

Its subcellular location is the plastid. The protein resides in the chloroplast. The chain is Large ribosomal subunit protein bL33c from Barbarea verna (Land cress).